The chain runs to 173 residues: Pectinesterase inhibitor 2 (173 aa).

Positions methionine 1 to alanine 25 are cleaved as a signal peptide. A disulfide bridge connects residues cysteine 34 and cysteine 43. Residues asparagine 39 and asparagine 63 are each glycosylated (N-linked (GlcNAc...) asparagine). Cysteine 99 and cysteine 139 are oxidised to a cystine.

The protein belongs to the PMEI family. In terms of assembly, interacts with PPME1. Highest expression in flowers. Expressed exclusively at the pollen tube tip.

Its subcellular location is the secreted. It is found in the extracellular space. The protein resides in the apoplast. In terms of biological role, inhibits pectin methylesterase (PME) from flowers, siliques and pollen tube. This Arabidopsis thaliana (Mouse-ear cress) protein is Pectinesterase inhibitor 2.